A 181-amino-acid polypeptide reads, in one-letter code: Adenylate kinase (181 aa).

10 to 15 (GAGKGT) is an ATP binding site. The tract at residues 30-59 (STGDLFRKNIGDGTPLGLEAKRYLDAGDLV) is NMP. Residues Thr-31, Arg-36, 57–59 (DLV), 85–88 (GYPR), and Gln-92 each bind AMP. The LID stretch occupies residues 126-132 (GRGRADD). Residue Arg-127 participates in ATP binding. 2 residues coordinate AMP: Arg-129 and Arg-140. Residue Gly-166 coordinates ATP.

The protein belongs to the adenylate kinase family. Monomer.

It is found in the cytoplasm. It catalyses the reaction AMP + ATP = 2 ADP. The protein operates within purine metabolism; AMP biosynthesis via salvage pathway; AMP from ADP: step 1/1. Catalyzes the reversible transfer of the terminal phosphate group between ATP and AMP. Plays an important role in cellular energy homeostasis and in adenine nucleotide metabolism. The sequence is that of Adenylate kinase from Mycolicibacterium smegmatis (strain ATCC 700084 / mc(2)155) (Mycobacterium smegmatis).